The sequence spans 520 residues: Ribonuclease Y (520 aa).

Over 1–3 the chain is Extracellular; sequence MTP. A helical membrane pass occupies residues 4-24; the sequence is IMMVLISILLILLGLVVGYFV. The Cytoplasmic portion of the chain corresponds to 25–520; that stretch reads RKTIAEAKIA…RETRAVEYAK (496 aa). The stretch at 29–141 forms a coiled coil; sequence AEAKIAGARG…KVDEMIRMQQ (113 aa). In terms of domain architecture, KH spans 210–273; that stretch reads TVSVVNLPND…ETARIALDKL (64 aa). The 94-residue stretch at 336–429 folds into the HD domain; it reads VLKHSMEVAF…VAAADALSAA (94 aa).

This sequence belongs to the RNase Y family. In terms of assembly, homodimer. Component of a possible RNA degradosome complex composed of rny, rnjA, rnjB, pnp, pfkA and eno (although rnjA and rnjB's presence is unclear). Interacts with RNA helicase CshA which may also be a member of the RNA degradosome complex. Interacts with full-length dynamin-like protein DynA. Requires Mg(2+) as cofactor. Mn(2+) is required as a cofactor. The cofactor is Zn(2+).

It localises to the cell membrane. Shows preference for transcripts carrying a monophosphate group at the 5' end. Its function is as follows. Endoribonuclease that initiates mRNA decay. Initiates the decay of all SAM-dependent riboswitches, such as yitJ riboswitch. Involved in processing of the gapA operon mRNA, it cleaves between cggR and gapA. Is also the decay-initiating endonuclease for rpsO mRNA. Involved in degradation of type I toxin-antitoxin system bsrG/SR4 RNAs and a minor role in degradation of type I toxin-antitoxin system bsrE/SR5 degradation. The protein is Ribonuclease Y (rny) of Bacillus subtilis (strain 168).